Consider the following 123-residue polypeptide: Phosphoribosyl-AMP cyclohydrolase (123 aa).

Position 76 (D76) interacts with Mg(2+). Residue C77 coordinates Zn(2+). Positions 78 and 80 each coordinate Mg(2+). 2 residues coordinate Zn(2+): C93 and C100.

It belongs to the PRA-CH family. In terms of assembly, homodimer. Mg(2+) serves as cofactor. Zn(2+) is required as a cofactor.

The protein resides in the cytoplasm. The enzyme catalyses 1-(5-phospho-beta-D-ribosyl)-5'-AMP + H2O = 1-(5-phospho-beta-D-ribosyl)-5-[(5-phospho-beta-D-ribosylamino)methylideneamino]imidazole-4-carboxamide. Its pathway is amino-acid biosynthesis; L-histidine biosynthesis; L-histidine from 5-phospho-alpha-D-ribose 1-diphosphate: step 3/9. Functionally, catalyzes the hydrolysis of the adenine ring of phosphoribosyl-AMP. This Methanocorpusculum labreanum (strain ATCC 43576 / DSM 4855 / Z) protein is Phosphoribosyl-AMP cyclohydrolase.